A 478-amino-acid chain; its full sequence is Allene oxide synthase 2 (478 aa).

The heme b site is built by K88, H119, and K123. (13S)-hydroperoxy-(9Z,11E,15Z)-octadecatrienoate is bound at residue N278. Heme b is bound by residues K427 and C429.

Belongs to the cytochrome P450 family. Requires heme b as cofactor. In terms of tissue distribution, weakly expressed in roots, shoots, leaves and flowers.

The catalysed reaction is (13S)-hydroperoxy-(9Z,11E,15Z)-octadecatrienoate = (9Z,13S,15Z)-12,13-epoxyoctadeca-9,11,15-trienoate + H2O. Its pathway is lipid metabolism; oxylipin biosynthesis. Involved in the biosynthesis of jasmonic acid, a growth regulator that is implicated also as a signaling molecule in plant defense. Converts 13-hydroperoxylinolenic acid to 12,13-epoxylinolenic acid. In Oryza sativa subsp. japonica (Rice), this protein is Allene oxide synthase 2 (CYP74A2).